The following is an 889-amino-acid chain: Protein SEY1 homolog (889 aa).

Over methionine 1 to asparagine 801 the chain is Cytoplasmic. Residues glycine 31–cysteine 277 form the GB1/RHD3-type G domain. A GTP-binding site is contributed by glycine 41 to serine 48. The interval arginine 429 to threonine 449 is disordered. Residues leucine 679–serine 699 are a coiled coil. Residues valine 802–threonine 822 traverse the membrane as a helical segment. Residues arginine 823–phenylalanine 825 lie on the Lumenal side of the membrane. Residues phenylalanine 826–valine 846 traverse the membrane as a helical segment. The Cytoplasmic segment spans residues phenylalanine 847–aspartate 889.

The protein belongs to the TRAFAC class dynamin-like GTPase superfamily. GB1/RHD3 GTPase family. RHD3 subfamily.

The protein resides in the endoplasmic reticulum membrane. In terms of biological role, probable GTP-binding protein involved in generating and maintaining the structure of the tubular endoplasmic reticulum network. The sequence is that of Protein SEY1 homolog from Plasmodium vivax (strain Salvador I).